Here is a 240-residue protein sequence, read N- to C-terminus: Uridylate kinase (240 aa).

ATP is bound by residues 15–18, Gly-58, and Arg-62; that span reads KISG. UMP is bound by residues Asp-77 and 138-145; that span reads TGNPLFTT. The ATP site is built by Thr-165, Tyr-171, and Asp-174.

This sequence belongs to the UMP kinase family. Homohexamer.

It is found in the cytoplasm. The enzyme catalyses UMP + ATP = UDP + ADP. It participates in pyrimidine metabolism; CTP biosynthesis via de novo pathway; UDP from UMP (UMPK route): step 1/1. Its activity is regulated as follows. Inhibited by UTP. Functionally, catalyzes the reversible phosphorylation of UMP to UDP. This Buchnera aphidicola subsp. Schizaphis graminum (strain Sg) protein is Uridylate kinase.